Here is a 506-residue protein sequence, read N- to C-terminus: Tabersonine 6,7-epoxidase isoform 1 (506 aa).

The chain crosses the membrane as a helical span at residues 1–21 (MEFVVSLFAFVVSCFILLKVA). N-linked (GlcNAc...) asparagine glycans are attached at residues N173 and N261. C441 serves as a coordination point for heme.

It belongs to the cytochrome P450 family. The cofactor is heme. As to expression, mainly expressed in roots.

It is found in the endoplasmic reticulum membrane. It catalyses the reaction (-)-tabersonine + reduced [NADPH--hemoprotein reductase] + O2 = lochnericine + oxidized [NADPH--hemoprotein reductase] + H2O + H(+). The protein operates within alkaloid biosynthesis. Functionally, component of the monoterpenoid indole alkaloids (MIAs, e.g. echitovenine, tabersonine, lochnericine, 19-hydroxytabersonine and horhammericine) biosynthetic pathway; MIAs are used in cancer treatment and other medical applications. Cytochrome P450 catalyzing the conversion of tabersonine to lochnericine. The chain is Tabersonine 6,7-epoxidase isoform 1 from Catharanthus roseus (Madagascar periwinkle).